The primary structure comprises 166 residues: MKVYIIDYHKDDPKRCTGKKLVKLKIAEFTRVGKGVVLDPFAQITLSNKDKDIVRRIGITIVDTSWNNTSQSEFKNIRGEHRRIPILFAGNPIHYGIAYKLSSIEALIATLYIVDEVEEAIKLSNVVKWGHTFIELNKELLEAYKNKTEEDIKKIEREIIEKILEK.

S-adenosyl-L-methionine contacts are provided by threonine 17, valine 62, isoleucine 84, tyrosine 99, and serine 103.

Belongs to the TDD superfamily. TSR3 family.

Its subcellular location is the cytoplasm. It catalyses the reaction an N(1)-methylpseudouridine in rRNA + S-adenosyl-L-methionine = N(1)-methyl-N(3)-[(3S)-3-amino-3-carboxypropyl]pseudouridine in rRNA + S-methyl-5'-thioadenosine + H(+). Functionally, aminocarboxypropyltransferase that catalyzes the aminocarboxypropyl transfer on pseudouridine corresponding to position 914 in M.jannaschii 16S rRNA. It constitutes the last step in biosynthesis of the hypermodified N1-methyl-N3-(3-amino-3-carboxypropyl) pseudouridine (m1acp3-Psi). This Saccharolobus solfataricus (strain ATCC 35092 / DSM 1617 / JCM 11322 / P2) (Sulfolobus solfataricus) protein is 16S rRNA aminocarboxypropyltransferase.